The following is a 432-amino-acid chain: 3-phosphoshikimate 1-carboxyvinyltransferase (432 aa).

3 residues coordinate 3-phosphoshikimate: Lys23, Ser24, and Arg28. A phosphoenolpyruvate-binding site is contributed by Lys23. The phosphoenolpyruvate site is built by Gly95 and Arg123. The 3-phosphoshikimate site is built by Ser167, Gln169, Asp317, and Lys344. Gln169 serves as a coordination point for phosphoenolpyruvate. Asp317 acts as the Proton acceptor in catalysis. Arg348 and Arg390 together coordinate phosphoenolpyruvate.

It belongs to the EPSP synthase family. In terms of assembly, monomer.

It localises to the cytoplasm. It catalyses the reaction 3-phosphoshikimate + phosphoenolpyruvate = 5-O-(1-carboxyvinyl)-3-phosphoshikimate + phosphate. It functions in the pathway metabolic intermediate biosynthesis; chorismate biosynthesis; chorismate from D-erythrose 4-phosphate and phosphoenolpyruvate: step 6/7. In terms of biological role, catalyzes the transfer of the enolpyruvyl moiety of phosphoenolpyruvate (PEP) to the 5-hydroxyl of shikimate-3-phosphate (S3P) to produce enolpyruvyl shikimate-3-phosphate and inorganic phosphate. This chain is 3-phosphoshikimate 1-carboxyvinyltransferase, found in Staphylococcus aureus (strain JH9).